A 385-amino-acid chain; its full sequence is Di-N-acetylchitobiase (385 aa).

The N-terminal stretch at 1-38 (MSRPQLRRWRLVSSPPSGVPGLALLALLALLALRLAAG) is a signal peptide. A GH18 domain is found at 39–385 (TDCPCPEPEL…EVLKPKLLQR (347 aa)). Residue Glu-143 is the Proton donor of the active site. Asn-193, Asn-228, Asn-262, and Asn-299 each carry an N-linked (GlcNAc...) asparagine glycan.

Belongs to the glycosyl hydrolase 18 family.

Its subcellular location is the lysosome. In terms of biological role, involved in the degradation of asparagine-linked glycoproteins. Hydrolyze of N-acetyl-beta-D-glucosamine (1-4)N-acetylglucosamine chitobiose core from the reducing end of the bond, it requires prior cleavage by glycosylasparaginase. This Homo sapiens (Human) protein is Di-N-acetylchitobiase (CTBS).